We begin with the raw amino-acid sequence, 425 residues long: Malate transporter MleP (425 aa).

The next 11 helical transmembrane spans lie at 11 to 31, 35 to 55, 65 to 85, 96 to 116, 134 to 154, 196 to 216, 246 to 266, 269 to 289, 310 to 330, 339 to 359, and 401 to 421; these read GISL…TLLG, LDMV…YFIG, LGGG…FHIV, FMGG…CGSI, IALI…MLIG, IFSQ…IGAL, IKLD…LLMA, ILNK…IVFI, VIMT…LIDL, WQFV…SWFL, and FAQM…GILI.

It belongs to the 2-hydroxycarboxylate transporter (2-HCT) (TC 2.A.24) family.

It is found in the cell membrane. The enzyme catalyses (S)-lactate(in) + (S)-malate(out) = (S)-lactate(out) + (S)-malate(in). It carries out the reaction (R)-lactate(in) + (S)-malate(out) = (R)-lactate(out) + (S)-malate(in). The catalysed reaction is glycolate(in) + (S)-malate(out) = glycolate(out) + (S)-malate(in). Secondary transporter involved in malolactic fermentation. Catalyzes the uptake of divalent malate into the cell coupled to the exit of monovalent lactate, a product of malate degradation (precursor/product exchange). The malate/lactate exchange is electrogenic and results in the generation of a membrane potential. Is highly selective for the S-enantiomer of malate. In the absence of lactate, MleP can also catalyze the proton-dependent transport of malate. In vitro, transports a range of substrates that contain the 2-hydroxycarboxylate motif, HO-CR(2)-COO(-), with a preference for malate, lactate and glycolate. Modification of the OH or the COO(-) groups of the 2-hydroxycarboxylate motif drastically reduces the affinity of the transporter for the substrates, indicating their relevance in substrate recognition. Significant activity is also observed with some 2-oxocarboxylates. Transports only poorly citromalate. Citrate binds to MleP but is not translocated. In Lactococcus lactis subsp. lactis (strain IL1403) (Streptococcus lactis), this protein is Malate transporter MleP.